We begin with the raw amino-acid sequence, 285 residues long: Hsp90 co-chaperone Cdc37-like 1 (285 aa).

The disordered stretch occupies residues 34–54; it reads LHNSESMDQEQAMAQAELSEL. Residues 35 to 73 adopt a coiled-coil conformation; the sequence is HNSESMDQEQAMAQAELSELQRSEEEWRRKEAALSQGEN.

It belongs to the CDC37 family. In terms of assembly, forms complexes with Hsp70 and Hsp90.

It is found in the cytoplasm. In terms of biological role, co-chaperone that binds to numerous proteins and promotes their interaction with Hsp70 and Hsp90. The protein is Hsp90 co-chaperone Cdc37-like 1 (cdc37l1) of Xenopus tropicalis (Western clawed frog).